Reading from the N-terminus, the 106-residue chain is Large ribosomal subunit protein P2 (106 aa).

Residues 80–106 are disordered; sequence AAAAPAKKVVEEKKEESDDDMGMGLFD.

Belongs to the eukaryotic ribosomal protein P1/P2 family. In terms of assembly, P1 and P2 exist as dimers at the large ribosomal subunit. Post-translationally, phosphorylated.

Its function is as follows. Plays an important role in the elongation step of protein synthesis. In Dictyostelium discoideum (Social amoeba), this protein is Large ribosomal subunit protein P2 (rplp2).